We begin with the raw amino-acid sequence, 532 residues long: Intercellular adhesion molecule 1 (532 aa).

The first 27 residues, 1 to 27 (MAPSGPQPALPILVVLLGALLLGPGNA), serve as a signal peptide directing secretion. The Extracellular portion of the chain corresponds to 28–480 (QTSVFPPEVI…TVNVLSPRYE (453 aa)). Ig-like C2-type domains follow at residues 41–103 (GGSV…QSSA) and 128–193 (GKNL…LDLR). A glycan (N-linked (GlcNAc...) asparagine) is linked at Asn47. 2 disulfides stabilise this stretch: Cys48–Cys92 and Cys52–Cys96. 2 N-linked (GlcNAc...) asparagine glycosylation sites follow: Asn130 and Asn145. An intrachain disulfide couples Cys135 to Cys186. The Cell attachment site; atypical signature appears at 152–154 (RGE). 5 N-linked (GlcNAc...) asparagine glycosylation sites follow: Asn183, Asn202, Asn267, Asn296, and Asn316. The Ig-like C2-type 3 domain maps to 230–297 (DTQGTVVCSL…LLCGVMLGNQ (68 aa)). Cys237 and Cys290 form a disulfide bridge. In terms of domain architecture, Ig-like C2-type 4 spans 325–378 (GTEVIVECEAHPRAKVMLNGVPAQPPGPRAQFLLKATPEDNGRSFSCSATLEVA). A disulfide bridge connects residues Cys332 and Cys371. 2 N-linked (GlcNAc...) asparagine glycosylation sites follow: Asn385 and Asn406. 3 disulfides stabilise this stretch: Cys403–Cys419, Cys419–Cys457, and Cys431–Cys457. The 53-residue stretch at 412-464 (NSQQTPMCQAWGNPLPQLKCLKDGTFPLPIGQSVTVTRDLEGTYLCQARSTRG) folds into the Ig-like C2-type 5 domain. The chain crosses the membrane as a helical span at residues 481–503 (VVIIPVVAAAVILGTAGVATYLY). Residues 504 to 532 (NRQRKIRKYRLQQAQNGTPMKPNTQATPP) lie on the Cytoplasmic side of the membrane. The tract at residues 513–532 (RLQQAQNGTPMKPNTQATPP) is disordered. Residues 515-532 (QQAQNGTPMKPNTQATPP) are compositionally biased toward polar residues. A phosphothreonine mark is found at Thr521 and Thr530.

It belongs to the immunoglobulin superfamily. ICAM family. In terms of assembly, homodimer. Interacts with MUC1 and promotes cell aggregation in epithelial cells. Interacts with ARHGEF26/SGEF. Interacts (on T cell side) with CD81, CD247 and CD9 at immunological synapses between antigen-presenting cells and T cells. Post-translationally, monoubiquitinated, which is promoted by MARCH9 and leads to endocytosis.

It is found in the membrane. Its function is as follows. ICAM proteins are ligands for the leukocyte adhesion protein LFA-1 (integrin alpha-L/beta-2). During leukocyte trans-endothelial migration, ICAM1 engagement promotes the assembly of endothelial apical cups through ARHGEF26/SGEF and RHOG activation. The protein is Intercellular adhesion molecule 1 (ICAM1) of Macaca mulatta (Rhesus macaque).